The following is a 289-amino-acid chain: Cell division protein ZipA (289 aa).

Position 1 (methionine 1) is a topological domain, periplasmic. Residues 2–22 traverse the membrane as a helical segment; the sequence is DIGLREWLIVIGLIVIAGILF. Residues 23–289 lie on the Cytoplasmic side of the membrane; sequence DGWRRMRGGK…HERRSLMQKR (267 aa). The interval 65–141 is disordered; sequence HREPSFDEQD…KEREKAPAVA (77 aa). Positions 81 to 99 are enriched in basic and acidic residues; sequence RETKERKGGKRQEEPRQGD. A compositionally biased stretch (acidic residues) spans 100-114; sequence LDLDEGLALEADPSD.

It belongs to the ZipA family. In terms of assembly, interacts with FtsZ via their C-terminal domains.

It localises to the cell inner membrane. In terms of biological role, essential cell division protein that stabilizes the FtsZ protofilaments by cross-linking them and that serves as a cytoplasmic membrane anchor for the Z ring. Also required for the recruitment to the septal ring of downstream cell division proteins. This Pseudomonas aeruginosa (strain UCBPP-PA14) protein is Cell division protein ZipA.